Here is a 465-residue protein sequence, read N- to C-terminus: Glutamyl-tRNA reductase 2 (465 aa).

Substrate contacts are provided by residues 62–65, S122, 127–129, and Q133; these read TCNR and EGQ. C63 acts as the Nucleophile in catalysis. 204 to 209 provides a ligand contact to NADP(+); sequence GAGKMG.

This sequence belongs to the glutamyl-tRNA reductase family.

The protein resides in the plastid. The protein localises to the chloroplast. It carries out the reaction (S)-4-amino-5-oxopentanoate + tRNA(Glu) + NADP(+) = L-glutamyl-tRNA(Glu) + NADPH + H(+). It participates in porphyrin-containing compound metabolism; protoporphyrin-IX biosynthesis; 5-aminolevulinate from L-glutamyl-tRNA(Glu): step 1/2. In terms of biological role, catalyzes the NADPH-dependent reduction of glutamyl-tRNA(Glu) to glutamate 1-semialdehyde (GSA). This chain is Glutamyl-tRNA reductase 2 (HEMA2), found in Hordeum vulgare (Barley).